The sequence spans 314 residues: Probable phytol kinase 1, chloroplastic (314 aa).

The transit peptide at 1 to 62 directs the protein to the chloroplast; sequence MAAAARPVDV…GVGAAAAPAV (62 aa). Transmembrane regions (helical) follow at residues 72 to 91, 111 to 131, 135 to 155, 181 to 201, 234 to 254, 266 to 286, and 294 to 314; these read AALR…YSLV, IVHV…SNST, FFAA…GLRL, YVIV…IGIV, IGSI…LFYF, LALG…CIPV, and ISVP…SSCC.

The protein belongs to the polyprenol kinase family.

It localises to the plastid. Its subcellular location is the chloroplast membrane. The enzyme catalyses phytol + CTP = phytyl phosphate + CDP + H(+). It functions in the pathway cofactor biosynthesis; tocopherol biosynthesis. Functionally, involved in the activation and reutilization of phytol from chlorophyll degradation in plant metabolism, including tocopherol biosynthesis. Catalyzes the conversion of phytol to phytol monophosphate (PMP). This is Probable phytol kinase 1, chloroplastic from Oryza sativa subsp. japonica (Rice).